The primary structure comprises 366 residues: Aminomethyltransferase (366 aa).

This sequence belongs to the GcvT family. The glycine cleavage system is composed of four proteins: P, T, L and H.

The enzyme catalyses N(6)-[(R)-S(8)-aminomethyldihydrolipoyl]-L-lysyl-[protein] + (6S)-5,6,7,8-tetrahydrofolate = N(6)-[(R)-dihydrolipoyl]-L-lysyl-[protein] + (6R)-5,10-methylene-5,6,7,8-tetrahydrofolate + NH4(+). In terms of biological role, the glycine cleavage system catalyzes the degradation of glycine. In Bacillus cereus (strain ATCC 10987 / NRS 248), this protein is Aminomethyltransferase.